The primary structure comprises 764 residues: 5-methyltetrahydropteroyltriglutamate--homocysteine methyltransferase (764 aa).

5-methyltetrahydropteroyltri-L-glutamate contacts are provided by residues 16-19 (RELK) and K117. Residues 442–444 (IGS) and E495 each bind L-homocysteine. Residues 442–444 (IGS) and E495 each bind L-methionine. 5-methyltetrahydropteroyltri-L-glutamate is bound by residues 526 to 527 (RC) and W572. An L-homocysteine-binding site is contributed by D610. Residue D610 coordinates L-methionine. Position 616 (E616) interacts with 5-methyltetrahydropteroyltri-L-glutamate. Zn(2+)-binding residues include H652, C654, and E676. H705 (proton donor) is an active-site residue. C737 is a binding site for Zn(2+).

The protein belongs to the vitamin-B12 independent methionine synthase family. It depends on Zn(2+) as a cofactor.

The catalysed reaction is 5-methyltetrahydropteroyltri-L-glutamate + L-homocysteine = tetrahydropteroyltri-L-glutamate + L-methionine. Its pathway is amino-acid biosynthesis; L-methionine biosynthesis via de novo pathway; L-methionine from L-homocysteine (MetE route): step 1/1. Its function is as follows. Catalyzes the transfer of a methyl group from 5-methyltetrahydrofolate to homocysteine resulting in methionine formation. This Bordetella petrii (strain ATCC BAA-461 / DSM 12804 / CCUG 43448) protein is 5-methyltetrahydropteroyltriglutamate--homocysteine methyltransferase.